Consider the following 504-residue polypeptide: Maturase K (504 aa).

This sequence belongs to the intron maturase 2 family. MatK subfamily.

Its subcellular location is the plastid. The protein localises to the chloroplast. In terms of biological role, usually encoded in the trnK tRNA gene intron. Probably assists in splicing its own and other chloroplast group II introns. The protein is Maturase K of Chimaphila umbellata (Pipsissewa).